The following is a 752-amino-acid chain: Protein WEAK CHLOROPLAST MOVEMENT UNDER BLUE LIGHT-like 2 (752 aa).

A Phosphoserine modification is found at Ser-143. 2 coiled-coil regions span residues 186-557 and 596-651; these read ERRK…SRAS and ELSK…KEAM. Positions 476–495 are disordered; that stretch reads KHDLSETRQRNREDTREEKC. Residues 653-675 are compositionally biased toward basic and acidic residues; it reads KVEKARDGKVGMDHELRKWRSDN. The tract at residues 653-733 is disordered; that stretch reads KVEKARDGKV…ETETKKKKKR (81 aa). The segment covering 690 to 723 has biased composition (polar residues); that stretch reads KSKSALHQPTTFTFGEQASSSNVTPQASSSNVTP.

This sequence belongs to the WEB family.

In Arabidopsis thaliana (Mouse-ear cress), this protein is Protein WEAK CHLOROPLAST MOVEMENT UNDER BLUE LIGHT-like 2 (WEL2).